A 273-amino-acid polypeptide reads, in one-letter code: Rhamnulose-1-phosphate aldolase (273 aa).

The active site involves Glu-117. Residues His-140, His-142, and His-211 each contribute to the Zn(2+) site.

It belongs to the aldolase class II family. RhaD subfamily. Zn(2+) is required as a cofactor.

The protein resides in the cytoplasm. It catalyses the reaction L-rhamnulose 1-phosphate = (S)-lactaldehyde + dihydroxyacetone phosphate. Its pathway is carbohydrate degradation; L-rhamnose degradation; glycerone phosphate from L-rhamnose: step 3/3. In terms of biological role, catalyzes the reversible cleavage of L-rhamnulose-1-phosphate to dihydroxyacetone phosphate (DHAP) and L-lactaldehyde. The sequence is that of Rhamnulose-1-phosphate aldolase from Listeria monocytogenes serotype 4a (strain HCC23).